Here is a 241-residue protein sequence, read N- to C-terminus: MEWREEGILLSTRRHGESAAIIEVFTPSHGRHAGVVRGGTSRKIAPILQPGAQLDLTWRARLEDHIGSFLVEPVRSRAAAAMGDRLALAGLNAVTALLGFCLPEREAHRPLYVETERLLDLLGEGEIWPLAYLRWEVQLLHDMGYALALEACAVTGQRDDLIYVSPKSGRAVSAKGAGDWADRLLPLPPILRGIGGGPDAEIAQAFITTGYFLTEHLARDLGGKPLPEARARFVETFSRRL.

This sequence belongs to the RecO family.

In terms of biological role, involved in DNA repair and RecF pathway recombination. In Roseobacter denitrificans (strain ATCC 33942 / OCh 114) (Erythrobacter sp. (strain OCh 114)), this protein is DNA repair protein RecO.